The chain runs to 199 residues: Outer-membrane lipoprotein LolB (199 aa).

Positions 1-28 (MSACPAPRSPVRWLHAFTLFLLLAVLAG) are cleaved as a signal peptide. Residue Cys-29 is the site of N-palmitoyl cysteine attachment. Cys-29 carries the S-diacylglycerol cysteine lipid modification.

It belongs to the LolB family. In terms of assembly, monomer.

It localises to the cell outer membrane. Plays a critical role in the incorporation of lipoproteins in the outer membrane after they are released by the LolA protein. This Bordetella pertussis (strain Tohama I / ATCC BAA-589 / NCTC 13251) protein is Outer-membrane lipoprotein LolB.